The chain runs to 163 residues: Meiotically up-regulated gene 109 protein (163 aa).

4 helical membrane passes run 61 to 78, 82 to 104, 114 to 134, and 136 to 156; these read YRFYGTLLCICWLYFFIW, ALLALMVGVFLSFVMHGLGSLTI, YSIPGVCAVTLIVIMFLAPVG, and LFWSFCIVSSFAGLHCLLTTY.

It localises to the membrane. In terms of biological role, has a role in meiosis. In Schizosaccharomyces pombe (strain 972 / ATCC 24843) (Fission yeast), this protein is Meiotically up-regulated gene 109 protein (mug109).